We begin with the raw amino-acid sequence, 465 residues long: UDP-N-acetylmuramate--L-alanine ligase (465 aa).

Residue 114-120 participates in ATP binding; that stretch reads GTHGKTT.

It belongs to the MurCDEF family.

It localises to the cytoplasm. The catalysed reaction is UDP-N-acetyl-alpha-D-muramate + L-alanine + ATP = UDP-N-acetyl-alpha-D-muramoyl-L-alanine + ADP + phosphate + H(+). It functions in the pathway cell wall biogenesis; peptidoglycan biosynthesis. In terms of biological role, cell wall formation. In Chelativorans sp. (strain BNC1), this protein is UDP-N-acetylmuramate--L-alanine ligase.